The sequence spans 291 residues: Release factor glutamine methyltransferase (291 aa).

Residues 127-131 (GTGSG), Asp150, Trp179, and Asn196 each bind S-adenosyl-L-methionine. 196 to 199 (NPPY) contacts substrate.

The protein belongs to the protein N5-glutamine methyltransferase family. PrmC subfamily.

The enzyme catalyses L-glutaminyl-[peptide chain release factor] + S-adenosyl-L-methionine = N(5)-methyl-L-glutaminyl-[peptide chain release factor] + S-adenosyl-L-homocysteine + H(+). Its function is as follows. Methylates the class 1 translation termination release factors RF1/PrfA and RF2/PrfB on the glutamine residue of the universally conserved GGQ motif. The polypeptide is Release factor glutamine methyltransferase (Thermosynechococcus vestitus (strain NIES-2133 / IAM M-273 / BP-1)).